We begin with the raw amino-acid sequence, 538 residues long: Tetracenomycin C resistance and export protein (538 aa).

The next 14 helical transmembrane spans lie at 28-48, 65-85, 100-120, 126-146, 154-174, 181-201, 213-233, 239-259, 286-306, 319-339, 342-362, 371-391, 413-433, and 494-514; these read LLAVAVGVMMVALDSTIVAIA, WITNGYLLALAVSLITAGKLG, GFAVTSAAIGLSGSVAAIVVF, LFGALMQPSALGLLRVTFPPG, IWSGVVGASTAAGPIIGGLLV, AVFFINVPVGLAALVAGLVIL, FDVSGIVLLSGAMFCLVWGLI, GWGDLRTLGFLAAAVLAFAGF, VLMVLMAFSFIGGLFFVTFYL, VHLLPLTGMMIVGAPVSGIVI, FGPGGPLVVGMLLTAASLWGM, MGITSLWFVLLGLGLAPVMVG, QSAMQVGGSLGTAVLGVLMAS, and MGLAFTVAGAVALVAAAVALF.

This sequence belongs to the major facilitator superfamily. EmrB family.

It is found in the cell membrane. It participates in antibiotic biosynthesis; tetracenomycin C biosynthesis. Its function is as follows. Resistance to tetracenomycin C by an active tetracenomycin C efflux system which is probably energized by transmembrane electrochemical gradients. The chain is Tetracenomycin C resistance and export protein (tcmA) from Streptomyces glaucescens.